Here is a 422-residue protein sequence, read N- to C-terminus: Multifunctional CCA protein (422 aa).

Positions 8 and 11 each coordinate ATP. CTP-binding residues include Gly8 and Arg11. Residues Asp21 and Asp23 each coordinate Mg(2+). ATP is bound by residues Arg91, Arg137, and Arg140. CTP contacts are provided by Arg91, Arg137, and Arg140. Residues 228 to 329 (TGLHSLMALE…VKLLQSCDAW (102 aa)) enclose the HD domain. The interval 403 to 422 (FKQDNAPEAQEKGGEDVGLT) is disordered.

This sequence belongs to the tRNA nucleotidyltransferase/poly(A) polymerase family. Bacterial CCA-adding enzyme type 1 subfamily. In terms of assembly, monomer. Can also form homodimers and oligomers. It depends on Mg(2+) as a cofactor. Ni(2+) serves as cofactor.

It catalyses the reaction a tRNA precursor + 2 CTP + ATP = a tRNA with a 3' CCA end + 3 diphosphate. It carries out the reaction a tRNA with a 3' CCA end + 2 CTP + ATP = a tRNA with a 3' CCACCA end + 3 diphosphate. Catalyzes the addition and repair of the essential 3'-terminal CCA sequence in tRNAs without using a nucleic acid template. Adds these three nucleotides in the order of C, C, and A to the tRNA nucleotide-73, using CTP and ATP as substrates and producing inorganic pyrophosphate. tRNA 3'-terminal CCA addition is required both for tRNA processing and repair. Also involved in tRNA surveillance by mediating tandem CCA addition to generate a CCACCA at the 3' terminus of unstable tRNAs. While stable tRNAs receive only 3'-terminal CCA, unstable tRNAs are marked with CCACCA and rapidly degraded. This chain is Multifunctional CCA protein, found in Hahella chejuensis (strain KCTC 2396).